A 104-amino-acid polypeptide reads, in one-letter code: Urease subunit beta (104 aa).

This sequence belongs to the urease beta subunit family. In terms of assembly, heterotrimer of UreA (gamma), UreB (beta) and UreC (alpha) subunits. Three heterotrimers associate to form the active enzyme.

Its subcellular location is the cytoplasm. It catalyses the reaction urea + 2 H2O + H(+) = hydrogencarbonate + 2 NH4(+). It functions in the pathway nitrogen metabolism; urea degradation; CO(2) and NH(3) from urea (urease route): step 1/1. This chain is Urease subunit beta, found in Rhodopseudomonas palustris (strain BisB5).